We begin with the raw amino-acid sequence, 459 residues long: tRNA modification GTPase MnmE (459 aa).

Residues arginine 22, glutamate 85, and arginine 124 each coordinate (6S)-5-formyl-5,6,7,8-tetrahydrofolate. A TrmE-type G domain is found at 221–380; the sequence is GLSTVIVGKP…LELQIRDLFF (160 aa). Asparagine 231 contacts K(+). Residues 231-236, 250-256, and 275-278 contribute to the GTP site; these read NVGKSS, TEVAGTT, and DTAG. Serine 235 lines the Mg(2+) pocket. K(+) is bound by residues threonine 250, valine 252, and threonine 255. Threonine 256 is a binding site for Mg(2+). Lysine 459 lines the (6S)-5-formyl-5,6,7,8-tetrahydrofolate pocket.

It belongs to the TRAFAC class TrmE-Era-EngA-EngB-Septin-like GTPase superfamily. TrmE GTPase family. As to quaternary structure, homodimer. Heterotetramer of two MnmE and two MnmG subunits. K(+) is required as a cofactor.

It is found in the cytoplasm. Functionally, exhibits a very high intrinsic GTPase hydrolysis rate. Involved in the addition of a carboxymethylaminomethyl (cmnm) group at the wobble position (U34) of certain tRNAs, forming tRNA-cmnm(5)s(2)U34. This is tRNA modification GTPase MnmE from Staphylococcus haemolyticus (strain JCSC1435).